The chain runs to 252 residues: 2-succinyl-6-hydroxy-2,4-cyclohexadiene-1-carboxylate synthase (252 aa).

It belongs to the AB hydrolase superfamily. MenH family. Monomer.

The catalysed reaction is 5-enolpyruvoyl-6-hydroxy-2-succinyl-cyclohex-3-ene-1-carboxylate = (1R,6R)-6-hydroxy-2-succinyl-cyclohexa-2,4-diene-1-carboxylate + pyruvate. The protein operates within quinol/quinone metabolism; 1,4-dihydroxy-2-naphthoate biosynthesis; 1,4-dihydroxy-2-naphthoate from chorismate: step 3/7. It participates in quinol/quinone metabolism; menaquinone biosynthesis. Its function is as follows. Catalyzes a proton abstraction reaction that results in 2,5-elimination of pyruvate from 2-succinyl-5-enolpyruvyl-6-hydroxy-3-cyclohexene-1-carboxylate (SEPHCHC) and the formation of 2-succinyl-6-hydroxy-2,4-cyclohexadiene-1-carboxylate (SHCHC). The sequence is that of 2-succinyl-6-hydroxy-2,4-cyclohexadiene-1-carboxylate synthase from Shigella sonnei (strain Ss046).